Reading from the N-terminus, the 446-residue chain is Chromosomal replication initiator protein DnaA (446 aa).

The segment at 1 to 81 (MENISDLWNS…AKLAIRFIIP (81 aa)) is domain I, interacts with DnaA modulators. The segment at 81 to 109 (PQSQAEEDIDLPSVKQKHAHDESNHLPQS) is domain II. Residues 110–326 (MLNPKYTFDT…GALIRVVAYS (217 aa)) are domain III, AAA+ region. Positions 154, 156, 157, and 158 each coordinate ATP. Residues 327–446 (SLINKDMNAD…HVEEVKDILK (120 aa)) form a domain IV, binds dsDNA region.

This sequence belongs to the DnaA family. As to quaternary structure, oligomerizes as a right-handed, spiral filament on DNA at oriC.

The protein localises to the cytoplasm. Functionally, plays an essential role in the initiation and regulation of chromosomal replication. ATP-DnaA binds to the origin of replication (oriC) to initiate formation of the DNA replication initiation complex once per cell cycle. Binds the DnaA box (a 9 base pair repeat at the origin) and separates the double-stranded (ds)DNA. Forms a right-handed helical filament on oriC DNA; dsDNA binds to the exterior of the filament while single-stranded (ss)DNA is stabiized in the filament's interior. The ATP-DnaA-oriC complex binds and stabilizes one strand of the AT-rich DNA unwinding element (DUE), permitting loading of DNA polymerase. After initiation quickly degrades to an ADP-DnaA complex that is not apt for DNA replication. Binds acidic phospholipids. This chain is Chromosomal replication initiator protein DnaA, found in Bacillus mycoides (strain KBAB4) (Bacillus weihenstephanensis).